The primary structure comprises 435 residues: Glutamyl-tRNA reductase (435 aa).

Substrate contacts are provided by residues 49–52, Ser114, 119–121, and Gln125; these read TCNR and EPQ. Cys50 acts as the Nucleophile in catalysis. Position 204-209 (204-209) interacts with NADP(+); sequence GAGETI.

The protein belongs to the glutamyl-tRNA reductase family. In terms of assembly, homodimer.

It carries out the reaction (S)-4-amino-5-oxopentanoate + tRNA(Glu) + NADP(+) = L-glutamyl-tRNA(Glu) + NADPH + H(+). The protein operates within porphyrin-containing compound metabolism; protoporphyrin-IX biosynthesis; 5-aminolevulinate from L-glutamyl-tRNA(Glu): step 1/2. Catalyzes the NADPH-dependent reduction of glutamyl-tRNA(Glu) to glutamate 1-semialdehyde (GSA). The chain is Glutamyl-tRNA reductase from Actinobacillus succinogenes (strain ATCC 55618 / DSM 22257 / CCUG 43843 / 130Z).